The sequence spans 302 residues: MDQIRLTHLRQLEAESIHIIREVAAEFSNPVMLYSIGKDSSVMLHLARKAFYPGTLPFPLLHVDTGWKFREMYEFRDRTAKAYGCELLVHKNPEGVAMGINPFIHGSAKHTDIMKTEGLKQALNKYGFDAAFVGARRDEEKSRAKERIYSFRDRFHRWDPKNQRPELWHNYNGQINKGESIRVFPLSNWTEQDIWQYIWLENIDIVPLYLAAERPVLERDGMLMMIDDNRIDLQPGEVIKKRMVRFRTLGCWPLTGAVESNAQTLPEIIEEMLVSTTSERQGRVIDRDQAGSMELKKRQGYF.

The protein belongs to the PAPS reductase family. CysD subfamily. In terms of assembly, heterodimer composed of CysD, the smaller subunit, and CysN.

The catalysed reaction is sulfate + ATP + H(+) = adenosine 5'-phosphosulfate + diphosphate. The protein operates within sulfur metabolism; hydrogen sulfide biosynthesis; sulfite from sulfate: step 1/3. With CysN forms the ATP sulfurylase (ATPS) that catalyzes the adenylation of sulfate producing adenosine 5'-phosphosulfate (APS) and diphosphate, the first enzymatic step in sulfur assimilation pathway. APS synthesis involves the formation of a high-energy phosphoric-sulfuric acid anhydride bond driven by GTP hydrolysis by CysN coupled to ATP hydrolysis by CysD. In Shigella dysenteriae serotype 1 (strain Sd197), this protein is Sulfate adenylyltransferase subunit 2.